The primary structure comprises 27 residues: Small integral membrane protein 43 (27 aa).

The segment at 15–21 (HREPWGF) is important for interaction with SLC2A1 and SLC2A3.

In terms of assembly, interacts with glucose transporters SLC2A1/GLUT1 and SLC2A3/GLUT3; the interactions may promote SLC2A1- and SLC2A3-mediated glucose transport to meet the energy needs of mesendoderm differentiation.

The protein localises to the cell membrane. Required for mesendoderm differentiation. Interacts with glucose transporters and promotes glucose uptake. Probably augments the glucose uptake capacity of glucose transporter proteins to meet the energy needs of mesendoderm differentiation. This is Small integral membrane protein 43 from Pongo abelii (Sumatran orangutan).